The following is a 283-amino-acid chain: Putative Ig-like domain-containing protein ORF10 (283 aa).

The signal sequence occupies residues 1-55 (MIDKRNKKAVTHISTCLCHSSIPIYGDSPFLNTHRAAMDPRPLVLLLLLASHIST). N-linked (GlcNAc...) asparagine; by host glycosylation is found at N75, N92, N121, N157, N179, N198, N223, and N229. The 99-residue stretch at 129–227 (QPLGQSIHHA…IDQQTNLTLT (99 aa)) folds into the Ig-like domain.

This is Putative Ig-like domain-containing protein ORF10 from Galliformes (FAdV-1).